Consider the following 363-residue polypeptide: Circumsporozoite protein (363 aa).

Residues 1–22 form the signal peptide; it reads MKNFILLAVSSILLVDLLPTHF. Polar residues predominate over residues 48 to 57; the sequence is GAQQVRQSAS. Residues 48-278 are disordered; it reads GAQQVRQSAS…GQNNQGANAP (231 aa). Positions 61-96 are enriched in basic and acidic residues; sequence GLGEKPKEGADKEKKKEKGKEKEEEPKKPNENKLKQ. Residues 80–88 are required for the binding to heparan sulfate proteoglycans (HSPGs) on the surface of host hepatocytes; it reads KEKEEEPKK. A region I; contains the proteolytic cleavage site region spans residues 93–97; it reads KLKQP. Residues 98 to 109 form a 1; approximate repeat; it reads NEGQPQAQGDGA. Residues 98-241 are 12 X 12 AA approximate tandem repeats of N-A-G-Q-P-Q-A-Q-G-D-G-A; it reads NEGQPQAQGD…GQPQAQGDGA (144 aa). Repeat copies occupy residues 110–121, 122–133, 134–145, 146–157, 158–169, 170–181, 182–193, 194–205, 206–217, 218–229, and 230–241. Residues 248 to 259 show a composition bias toward gly residues; sequence RNGGGAPAGGNE. Residues 260–277 show a composition bias toward low complexity; sequence GNKQAGKGQGQNNQGANA. The TSP type-1 domain maps to 289–341; sequence KIRSSVTTEWTPCSVTCGNGVRIRRKAHAGNKKAEDLTMDDLEVEACVMDKCA. Disulfide bonds link C301-C335 and C305-C340. An O-linked (Fuc) threonine glycan is attached at T304. C340 carries GPI-anchor amidated cysteine lipidation. Residues 341–363 constitute a propeptide, removed in mature form; that stretch reads AGIFNVVSNSLGLVILLVLALFN.

The protein belongs to the plasmodium circumsporozoite protein family. Post-translationally, during host cell invasion, proteolytically cleaved at the cell membrane in the region I by a papain-like cysteine protease of parasite origin. Cleavage is triggered by the sporozoite contact with highly sulfated heparan sulfate proteoglycans (HSPGs) present on the host hepatocyte cell surface. Cleavage exposes the TSP type-1 (TSR) domain and is required for productive invasion of host hepatocytes but not for adhesion to the host cell membrane. Cleavage is dispensable for sporozoite development in the oocyst, motility and for traversal of host and vector cells. O-glycosylated; maybe by POFUT2.

The protein resides in the cell membrane. The protein localises to the cytoplasm. Functionally, essential sporozoite protein. In the mosquito vector, required for sporozoite development in the oocyst, migration through the vector hemolymph and entry into the vector salivary glands. In the vertebrate host, required for sporozoite migration through the host dermis and infection of host hepatocytes. Binds to highly sulfated heparan sulfate proteoglycans (HSPGs) on the surface of host hepatocytes. In the vertebrate host, binds to highly sulfated heparan sulfate proteoglycans (HSPGs) on the surface of host hepatocytes and is required for sporozoite invasion of the host hepatocytes. The chain is Circumsporozoite protein from Plasmodium knowlesi (strain H).